The primary structure comprises 78 residues: D-alanyl carrier protein (78 aa).

A Carrier domain is found at 1 to 78; that stretch reads MEFREQVLDL…KIVEVLEELR (78 aa). An O-(pantetheine 4'-phosphoryl)serine modification is found at Ser-36.

The protein belongs to the DltC family. In terms of processing, 4'-phosphopantetheine is transferred from CoA to a specific serine of apo-DCP.

The protein resides in the cytoplasm. It participates in cell wall biogenesis; lipoteichoic acid biosynthesis. Functionally, carrier protein involved in the D-alanylation of lipoteichoic acid (LTA). The loading of thioester-linked D-alanine onto DltC is catalyzed by D-alanine--D-alanyl carrier protein ligase DltA. The DltC-carried D-alanyl group is further transferred to cell membrane phosphatidylglycerol (PG) by forming an ester bond, probably catalyzed by DltD. D-alanylation of LTA plays an important role in modulating the properties of the cell wall in Gram-positive bacteria, influencing the net charge of the cell wall. The protein is D-alanyl carrier protein of Staphylococcus xylosus.